We begin with the raw amino-acid sequence, 279 residues long: Phosphatidylglycerol--prolipoprotein diacylglyceryl transferase (279 aa).

3 helical membrane passes run 18-38 (LSVR…YFVA), 55-75 (IIFY…VIFQ), and 89-109 (IWHG…AGVI). Residue arginine 137 participates in a 1,2-diacyl-sn-glycero-3-phospho-(1'-sn-glycerol) binding. Helical transmembrane passes span 203–223 (LGET…FIEG) and 235–255 (IRVA…LIVY).

This sequence belongs to the Lgt family.

It localises to the cell membrane. The catalysed reaction is L-cysteinyl-[prolipoprotein] + a 1,2-diacyl-sn-glycero-3-phospho-(1'-sn-glycerol) = an S-1,2-diacyl-sn-glyceryl-L-cysteinyl-[prolipoprotein] + sn-glycerol 1-phosphate + H(+). The protein operates within protein modification; lipoprotein biosynthesis (diacylglyceryl transfer). Catalyzes the transfer of the diacylglyceryl group from phosphatidylglycerol to the sulfhydryl group of the N-terminal cysteine of a prolipoprotein, the first step in the formation of mature lipoproteins. The polypeptide is Phosphatidylglycerol--prolipoprotein diacylglyceryl transferase (Staphylococcus aureus (strain USA300)).